A 263-amino-acid chain; its full sequence is Alpha-tubulin N-acetyltransferase 2 (263 aa).

In terms of domain architecture, N-acetyltransferase spans 1-181; sequence MEIAFDLSSI…NKYAVFPNFF (181 aa). 115-128 is an acetyl-CoA binding site; the sequence is FFIVPTEQRSGNGF. Disordered regions lie at residues 191-224 and 236-263; these read TPRQ…RPRH and FPRG…EPIW. Low complexity predominate over residues 200-212; that stretch reads RASSAVSSHTTSR. Residues 253–263 are compositionally biased toward basic and acidic residues; sequence LTRDQRHEPIW.

Belongs to the acetyltransferase ATAT1 family.

The catalysed reaction is L-lysyl-[alpha-tubulin] + acetyl-CoA = N(6)-acetyl-L-lysyl-[alpha-tubulin] + CoA + H(+). In terms of biological role, specifically acetylates 'Lys-40' in alpha-tubulin/mec-12 on the lumenal side of microtubules. Promotes microtubule destabilization and accelerates microtubule dynamics; this activity may be independent of acetylation activity. Acetylates alpha-tubulin with a slow enzymatic rate, due to a catalytic site that is not optimized for acetyl transfer. Enters the microtubule through each end and diffuses quickly throughout the lumen of microtubules. Acetylates only long/old microtubules because of its slow acetylation rate since it does not have time to act on dynamically unstable microtubules before the enzyme is released. Required for the maintenance of touch receptor neurons and possibly other type of neurons involved in locomotion. The sequence is that of Alpha-tubulin N-acetyltransferase 2 (atat-2) from Caenorhabditis briggsae.